The primary structure comprises 209 residues: 8-oxoguanine DNA glycosylase/AP lyase (209 aa).

Active-site residues include Lys-132 and Asp-150.

This sequence belongs to the type-2 OGG1 family.

The catalysed reaction is 2'-deoxyribonucleotide-(2'-deoxyribose 5'-phosphate)-2'-deoxyribonucleotide-DNA = a 3'-end 2'-deoxyribonucleotide-(2,3-dehydro-2,3-deoxyribose 5'-phosphate)-DNA + a 5'-end 5'-phospho-2'-deoxyribonucleoside-DNA + H(+). Catalyzes the excision of an oxidatively damaged form of guanine (7,8-dihydro-8-oxoguanine = 8-oxoG) from DNA. Also cleaves the DNA backbone at apurinic/apyrimidinic sites (AP sites). This Picrophilus torridus (strain ATCC 700027 / DSM 9790 / JCM 10055 / NBRC 100828 / KAW 2/3) protein is 8-oxoguanine DNA glycosylase/AP lyase.